Consider the following 287-residue polypeptide: 4,4'-diapophytoene synthase (287 aa).

Residues 18 to 21 (HSKS), Y41, and R45 each bind (2E,6E)-farnesyl diphosphate. Mg(2+) is bound by residues D48 and D52. Q165 lines the (2E,6E)-farnesyl diphosphate pocket. Residue N168 coordinates Mg(2+). Residue R171 participates in (2E,6E)-farnesyl diphosphate binding. D172 is a Mg(2+) binding site. Y248 serves as a coordination point for (2E,6E)-farnesyl diphosphate.

Belongs to the phytoene/squalene synthase family. CrtM subfamily. Mg(2+) is required as a cofactor.

It catalyses the reaction 2 (2E,6E)-farnesyl diphosphate = 15-cis-4,4'-diapophytoene + 2 diphosphate. The protein operates within carotenoid biosynthesis; staphyloxanthin biosynthesis; staphyloxanthin from farnesyl diphosphate: step 1/5. Involved in the biosynthesis of the yellow-orange carotenoid staphyloxanthin, which plays a role in the virulence via its protective function against oxidative stress. Catalyzes the head-to-head condensation of two molecules of farnesyl diphosphate (FPP) into the colorless C(30) carotenoid 4,4'-diapophytoene (dehydrosqualene). In Staphylococcus aureus (strain bovine RF122 / ET3-1), this protein is 4,4'-diapophytoene synthase (crtM).